We begin with the raw amino-acid sequence, 497 residues long: Keratin, type II cytoskeletal 8 (497 aa).

The interval 2 to 108 (TSYQRTVTVR…DPRIGQVRLE (107 aa)) is head. The coil 1A stretch occupies residues 109-149 (EKEQIKTLNNQFAGFIDKVRYLEQQNKLLETKWQLLQNQTT). One can recognise an IF rod domain in the interval 109–421 (EKEQIKTLNN…KLLEGEESRL (313 aa)). The interval 145–162 (QNQTTPSRSNLDSMFEAY) is linker 1. A coil 1B region spans residues 163–254 (ISNLRRQLDT…QIYDEEIREL (92 aa)). Residues 255 to 278 (QTQIQDTSVIVQMDNNRQLDLDNI) are linker 12. The tract at residues 279-417 (IAEVRAQYED…ATYRKLLEGE (139 aa)) is coil 2. Positions 418–497 (ESRLASGIQA…VSERSNIVKE (80 aa)) are tail.

This sequence belongs to the intermediate filament family. In terms of assembly, heterotetramer of two type I and two type II keratins. Keratin-8 associates with keratin-18. Expressed in skin.

It localises to the cytoplasm. It is found in the nucleus. Its subcellular location is the nucleoplasm. The protein resides in the nucleus matrix. Together with KRT19, helps to link the contractile apparatus to dystrophin at the costameres of striated muscle. The chain is Keratin, type II cytoskeletal 8 from Protopterus aethiopicus (Marbled lungfish).